The chain runs to 206 residues: 3-isopropylmalate dehydratase small subunit (206 aa).

This sequence belongs to the LeuD family. LeuD type 1 subfamily. Heterodimer of LeuC and LeuD.

It catalyses the reaction (2R,3S)-3-isopropylmalate = (2S)-2-isopropylmalate. It functions in the pathway amino-acid biosynthesis; L-leucine biosynthesis; L-leucine from 3-methyl-2-oxobutanoate: step 2/4. Functionally, catalyzes the isomerization between 2-isopropylmalate and 3-isopropylmalate, via the formation of 2-isopropylmaleate. The protein is 3-isopropylmalate dehydratase small subunit of Leptospira borgpetersenii serovar Hardjo-bovis (strain L550).